We begin with the raw amino-acid sequence, 358 residues long: MKFFDREKEIAEILHILNREPDDVYFIYGPINSGKTALINEIINNRLDKDKYVVFYFDLREIFISKYDDFIEVLFEEYEGNKKPVEIIKSLIKDVPSLCGIPAPKNTLEEILKKKTTKNVFRYITKVLMDIKKEGKQPILIIDELQKIGDMKINGFLIYELFNYFVSLTKHKHLCHVFCLSSDSLFIERVYNEAMLDGRAKYLLVDDFDKETALKFMDFLAKENNISLTNEDKELIYNYVGGKPKDIKYVVEESNFKDLKEVLDYLLNDEISKLDMFLEILDYSKPRVEVGNEVIEINKEDIIKALRLFKDKYEIPKKDIPTPVYVYLVKENILFLNPQKRILKPQSYLVWNAIKRLL.

29-36 (GPINSGKT) contacts ATP.

This sequence belongs to the archaeal ATPase family.

This is an uncharacterized protein from Methanocaldococcus jannaschii (strain ATCC 43067 / DSM 2661 / JAL-1 / JCM 10045 / NBRC 100440) (Methanococcus jannaschii).